A 961-amino-acid chain; its full sequence is Cytochrome b5-like reductase apf12 (961 aa).

A298 contributes to the FAD binding site. One can recognise an FAD-binding FR-type domain in the interval 429-548 (ARPQVDAFAW…IKPAPHFRIA (120 aa)). Residues 453-456 (SRIQ), 499-500 (SK), and G753 contribute to the NADP(+) site. A Cytochrome b5 heme-binding domain is found at 716–793 (LNQITKLELA…LNEMVIGRLD (78 aa)). Residue 753-755 (GGE) participates in FAD binding.

The protein belongs to the flavoprotein pyridine nucleotide cytochrome reductase family. FAD is required as a cofactor.

It participates in secondary metabolite biosynthesis. Cytochrome b5-like reductase; part of the gene cluster that mediates the biosynthesis of the cyclic tetrapeptide apicidin F (APF). The non-ribosomal peptide synthetase apf1 incorporates four different amino acids to produce apicidin F: L-phenylalanine, D-pipecolic acid (D-pip), N-methoxy-L-tryptophan and L-2-aminooctanedioic acid. L-Phenylalanine is the only proteinogenic amino acid directly used by apf1. The 3 other apf1 substrates are non-proteinogenic and have to be modified by other enzymes of the cluster. Lysine is converted to delta-1-pyrroline-5-carboxylate (P5C) which is reduced to L-pipecolic acid (L-pip) by apf3. L-pip is epimerized to D-pip, probably by apf1 activity, prior to incorporation. L-Tryptophan is N-oxidyzed by one of the cytochrome P450 monooxygenases (apf7 or apf8), and further methylated at the hydroxy group by the O-methyltransferase apf6 to yield N-methoxy-L-tryptophan. The synthesis of the fourth apf1 substrate is more complex. The fatty acid synthase apf5 is involved in the synthesis of the octanoic acid backbone of L-2-aminooctanedioic acid by fixing one acetyl-CoA unit and three malonyl-CoA units. Then one of the cytochrome P450 monooxygenases (apf7 or apf8) may oxidize this backbone to 2-oxooctanoic acid. The aminotransferase apf4 is predicted to catalyze the exchange of the keto group with an amino group. The next step would be the oxidation of 2-aminooctanoic acid by one of the cytochrome P450 monooxygenases (apf7 or apf8). The last step is the oxidation of 2-amino-8-hydroxyoctanoic acid to 2-aminooctanedioic acid is catalyzed by the FAD-dependent monooxygenase apf9. In Gibberella fujikuroi (strain CBS 195.34 / IMI 58289 / NRRL A-6831) (Bakanae and foot rot disease fungus), this protein is Cytochrome b5-like reductase apf12.